A 106-amino-acid chain; its full sequence is Nucleoid-associated protein RPA0616 (106 aa).

This sequence belongs to the YbaB/EbfC family. As to quaternary structure, homodimer.

The protein localises to the cytoplasm. The protein resides in the nucleoid. Its function is as follows. Binds to DNA and alters its conformation. May be involved in regulation of gene expression, nucleoid organization and DNA protection. The polypeptide is Nucleoid-associated protein RPA0616 (Rhodopseudomonas palustris (strain ATCC BAA-98 / CGA009)).